We begin with the raw amino-acid sequence, 340 residues long: DNA-directed RNA polymerase subunit alpha (340 aa).

The interval 1 to 236 (MLSLSKNWNT…EQLQLFISFE (236 aa)) is alpha N-terminal domain (alpha-NTD). The tract at residues 251–340 (FSPYLLKRVD…LSKRYEDSYN (90 aa)) is alpha C-terminal domain (alpha-CTD).

The protein belongs to the RNA polymerase alpha chain family. As to quaternary structure, homodimer. The RNAP catalytic core consists of 2 alpha, 1 beta, 1 beta' and 1 omega subunit. When a sigma factor is associated with the core the holoenzyme is formed, which can initiate transcription.

The enzyme catalyses RNA(n) + a ribonucleoside 5'-triphosphate = RNA(n+1) + diphosphate. Its function is as follows. DNA-dependent RNA polymerase catalyzes the transcription of DNA into RNA using the four ribonucleoside triphosphates as substrates. The protein is DNA-directed RNA polymerase subunit alpha of Rickettsia conorii (strain ATCC VR-613 / Malish 7).